Here is a 73-residue protein sequence, read N- to C-terminus: Translation initiation factor IF-1 (73 aa).

Residues 1-73 form the S1-like domain; that stretch reads MAKKEDTIVL…TKARVVYRHR (73 aa).

Belongs to the IF-1 family. Component of the 30S ribosomal translation pre-initiation complex which assembles on the 30S ribosome in the order IF-2 and IF-3, IF-1 and N-formylmethionyl-tRNA(fMet); mRNA recruitment can occur at any time during PIC assembly.

It is found in the cytoplasm. Its function is as follows. One of the essential components for the initiation of protein synthesis. Stabilizes the binding of IF-2 and IF-3 on the 30S subunit to which N-formylmethionyl-tRNA(fMet) subsequently binds. Helps modulate mRNA selection, yielding the 30S pre-initiation complex (PIC). Upon addition of the 50S ribosomal subunit IF-1, IF-2 and IF-3 are released leaving the mature 70S translation initiation complex. This chain is Translation initiation factor IF-1, found in Chlamydia abortus (strain DSM 27085 / S26/3) (Chlamydophila abortus).